A 438-amino-acid chain; its full sequence is MGKPIVAIVGRPNVGKSTLFNKLAGKRIAIVEDTPGVTRDRIYAQAEWLNHNFTIIDTGGIEPESEDIIVAQMRRQAEMAIEMADVIMFIVDGKEGLTPADNEVALMLRKSKKPIVLVVNKIDRIEEEDNMYEFYNLGIGEPTTISASQALGLGDMLDKIVENFPKGYQDEEEDEYIRIAFVGKPNVGKSSLINKILGEERNIVSNIPGTTRDAIDSFLERDEDKFILIDTAGLRRRSKVKDQIERYSTVRTYAAIDRADVCILLIDAEEGISEQDKKIIGYAHELNKALMVVVNKWDLIEKETNTMNRFKKELQSELSFMSYAPYIFISAKTGQRVGKVLDLAKECYTNYSKRISTGVLNDVISKAVMMKEPPIVAMNRLKIYYVTQVATKAPTFVFFVNDPRTLHFSYERYLENQLRQSFDFTGTGIKMEFRERKE.

2 consecutive EngA-type G domains span residues 4–168 (PIVA…PKGY) and 177–352 (IRIA…TNYS). Residues 10–17 (GRPNVGKS), 57–61 (DTGGI), 120–123 (NKID), 183–190 (GKPNVGKS), 230–234 (DTAGL), and 295–298 (NKWD) contribute to the GTP site. The KH-like domain occupies 353–437 (KRISTGVLND…GIKMEFRERK (85 aa)).

This sequence belongs to the TRAFAC class TrmE-Era-EngA-EngB-Septin-like GTPase superfamily. EngA (Der) GTPase family. In terms of assembly, associates with the 50S ribosomal subunit.

Its function is as follows. GTPase that plays an essential role in the late steps of ribosome biogenesis. The polypeptide is GTPase Der (Clostridium tetani (strain Massachusetts / E88)).